We begin with the raw amino-acid sequence, 141 residues long: Hemoglobin subunit alpha (141 aa).

The Globin domain occupies 1 to 141 (VLSSADKANI…VSTVLTSKYR (141 aa)). Ser3 bears the Phosphoserine mark. N6-succinyllysine occurs at positions 7 and 11. Residue Lys16 is modified to N6-acetyllysine; alternate. At Lys16 the chain carries N6-succinyllysine; alternate. Tyr24 bears the Phosphotyrosine mark. Lys40 carries the N6-succinyllysine modification. Ser49 bears the Phosphoserine mark. His58 provides a ligand contact to O2. Position 87 (His87) interacts with heme b. Residue Ser102 is modified to Phosphoserine. Position 108 is a phosphothreonine (Thr108). Residues Ser124 and Ser131 each carry the phosphoserine modification. Thr134 and Thr137 each carry phosphothreonine. Ser138 is modified (phosphoserine).

This sequence belongs to the globin family. Heterotetramer of two alpha chains and two beta chains. Red blood cells.

Functionally, involved in oxygen transport from the lung to the various peripheral tissues. Hemopressin acts as an antagonist peptide of the cannabinoid receptor CNR1. Hemopressin-binding efficiently blocks cannabinoid receptor CNR1 and subsequent signaling. This chain is Hemoglobin subunit alpha (HBA), found in Proteles cristata (Aardwolf).